The sequence spans 439 residues: Ectonucleotide pyrophosphatase/phosphodiesterase family member 7 (439 aa).

Positions 1–21 (MGHSAVLLCVALAILPACVTG) are cleaved as a signal peptide. Over 22 to 414 (APVQRQHKLL…ILRPMLRSGS (393 aa)) the chain is Extracellular. Asp36 and Thr72 together coordinate Zn(2+). Residues 69 to 75 (VTMTSPC) form a required for enzyme activity region. Catalysis depends on Thr72, which acts as the Nucleophile. Position 93 (Asn93) interacts with substrate. Residues Asn97, Asn118, Asn143, and Asn165 are each glycosylated (N-linked (GlcNAc...) asparagine). Asp196, His200, Asp243, and His244 together coordinate Zn(2+). Asn264 carries an N-linked (GlcNAc...) asparagine glycan. Position 350 (His350) interacts with Zn(2+). Residues 415 to 435 (ASLLSSQHHLVALLVGILTCL) traverse the membrane as a helical segment. The Cytoplasmic portion of the chain corresponds to 436–439 (AKVL).

Zn(2+) is required as a cofactor. In terms of processing, N-glycosylated; required for activity and transport to the plasma membrane. Expressed in liver and small intestine.

It is found in the cell membrane. The enzyme catalyses a sphingomyelin + H2O = phosphocholine + an N-acylsphing-4-enine + H(+). The catalysed reaction is a 1-O-alkyl-2-acetyl-sn-glycero-3-phosphocholine + H2O = a 1-O-alkyl-2-acetyl-sn-glycerol + phosphocholine + H(+). It catalyses the reaction 1-O-octadecyl-2-acetyl-sn-glycero-3-phosphocholine + H2O = 1-O-octadecyl-2-acetyl-sn-glycerol + phosphocholine + H(+). It carries out the reaction 1-hexadecanoyl-sn-glycero-3-phosphocholine + H2O = 1-hexadecanoyl-sn-glycerol + phosphocholine + H(+). Choline-specific phosphodiesterase that hydrolyzes sphingomyelin releasing the ceramide and phosphocholine and therefore is involved in sphingomyelin digestion, ceramide formation, and fatty acid (FA) absorption in the gastrointestinal tract. Also has phospholipase C activity and can also cleave phosphocholine from palmitoyl lyso-phosphatidylcholine and platelet-activating factor (PAF) leading to its inactivation. Does not have nucleotide pyrophosphatase activity. May promote cholesterol absorption by affecting the levels of sphingomyelin derived from either diet or endogenous sources, in the intestinal lumen. This is Ectonucleotide pyrophosphatase/phosphodiesterase family member 7 from Mus musculus (Mouse).